A 552-amino-acid polypeptide reads, in one-letter code: MHCERFLCILRIIGTTLFGVSLLLGITAAYIVGYQFIQTDNYYFSFGLYGAFLASHLIIQSLFAFLEHRKMKKSLETPIKLNKTVALCIAAYQEDPDYLRKCLQSVKRLTYPGIKVVMVIDGNSEDDLYMMDIFSEVMGRDKSATYIWKNNFHEKGPGETDESHKESSQHVTQLVLSNKSICIMQKWGGKREVMYTAFRALGRSVDYVQVCDSDTMLDPASSVEMVKVLEEDPMVGGVGGDVQILNKYDSWISFLSSVRYWMAFNIERACQSYFGCVQCISGPLGMYRNSLLHEFVEDWYNQEFMGNQCSFGDDRHLTNRVLSLGYATKYTARSKCLTETPIEYLRWLNQQTRWSKSYFREWLYNAMWFHKHHLWMTYEAIITGFFPFFLIATVIQLFYRGKIWNILLFLLTVQLVGLIKSSFASCLRGNIVMVFMSLYSVLYMSSLLPAKMFAIATINKAGWGTSGRKTIVVNFIGLIPVSVWFTILLGGVIFTIYKESKRPFSESKQTVLIVGTLLYACYWVMLLTLYVVLINKCGRRKKGQQYDMVLDV.

At 1 to 11 (MHCERFLCILR) the chain is on the cytoplasmic side. A helical membrane pass occupies residues 12–32 (IIGTTLFGVSLLLGITAAYIV). Residues 33 to 45 (GYQFIQTDNYYFS) are Extracellular-facing. A helical membrane pass occupies residues 46 to 66 (FGLYGAFLASHLIIQSLFAFL). Over 67-374 (EHRKMKKSLE…NAMWFHKHHL (308 aa)) the chain is Cytoplasmic. Threonine 110 bears the Phosphothreonine mark. Lysine 190 is covalently cross-linked (Glycyl lysine isopeptide (Lys-Gly) (interchain with G-Cter in ubiquitin)). The O-linked (GlcNAc) serine glycan is linked to serine 221. The residue at position 328 (threonine 328) is a Phosphothreonine. The helical transmembrane segment at 375–395 (WMTYEAIITGFFPFFLIATVI) threads the bilayer. Over 396 to 402 (QLFYRGK) the chain is Extracellular. A helical transmembrane segment spans residues 403-423 (IWNILLFLLTVQLVGLIKSSF). Residues 424-429 (ASCLRG) lie on the Cytoplasmic side of the membrane. Residues 430 to 450 (NIVMVFMSLYSVLYMSSLLPA) traverse the membrane as a helical segment. Topologically, residues 451–475 (KMFAIATINKAGWGTSGRKTIVVNF) are extracellular. A helical transmembrane segment spans residues 476 to 496 (IGLIPVSVWFTILLGGVIFTI). The Cytoplasmic portion of the chain corresponds to 497-510 (YKESKRPFSESKQT). Residues 511–531 (VLIVGTLLYACYWVMLLTLYV) form a helical membrane-spanning segment. The Extracellular portion of the chain corresponds to 532–552 (VLINKCGRRKKGQQYDMVLDV).

Belongs to the NodC/HAS family. As to quaternary structure, homodimer; dimerization promotes enzymatic activity. Forms heterodimer with HAS3. Forms heterodimer with HAS1. The cofactor is Mg(2+). Phosphorylation at Thr-328 is essential for hyaluronan synthase activity. Phosphorylation at Thr-110 is required for transport from ER to Golgi. In terms of processing, O-GlcNAcylation at Ser-221 increases the stability of HAS2 and plasma membrane localization. Post-translationally, ubiquitination at Lys-190; this ubiquitination is essential for hyaluronan synthase activity and homo- or hetero-oligomerization. Can also be poly-ubiquitinated. Deubiquitinated by USP17 and USP4. USP17 efficiently removes 'Lys-63'- and 'Lys-48'-linked polyubiquitin chains, whereas USP4 preferentially removes monoubiquitination and, partially, both 'Lys-63'- and 'Lys-48'-linked polyubiquitin chain. Expressed in fibroblasts.

It is found in the cell membrane. The protein resides in the endoplasmic reticulum membrane. The protein localises to the vesicle. It localises to the golgi apparatus membrane. Its subcellular location is the lysosome. The catalysed reaction is [hyaluronan](n) + UDP-N-acetyl-alpha-D-glucosamine = N-acetyl-beta-D-glucosaminyl-(1-&gt;4)-[hyaluronan](n) + UDP + H(+). The enzyme catalyses N-acetyl-beta-D-glucosaminyl-(1-&gt;4)-[hyaluronan](n) + UDP-alpha-D-glucuronate = [hyaluronan](n+1) + UDP + H(+). The protein operates within glycan biosynthesis; hyaluronan biosynthesis. Regulated by several post-translational modifications such as ubiquitination/deubiquitination, phosphorylation and O-GlcNAcylation. The enzymatic activity depends on the availability of UDP-GlcUA and UDP-GlcNAc. Catalyzes the addition of GlcNAc or GlcUA monosaccharides to the nascent hyaluronan polymer. Therefore, it is essential to hyaluronan synthesis a major component of most extracellular matrices that has a structural role in tissues architectures and regulates cell adhesion, migration and differentiation. This is one of three isoenzymes responsible for cellular hyaluronan synthesis and it is particularly responsible for the synthesis of high molecular mass hyaluronan. This chain is Hyaluronan synthase 2, found in Homo sapiens (Human).